Consider the following 289-residue polypeptide: Proteasome subunit beta (289 aa).

The propeptide at 1 to 55 (MTWPLPDRLSINSAISGSAVDLSSFAEFLRRQAPELLPASIKHGGGAVGDQLPHA) is removed in mature form; by autocatalysis. The active-site Nucleophile is T56.

Belongs to the peptidase T1B family. The 20S proteasome core is composed of 14 alpha and 14 beta subunits that assemble into four stacked heptameric rings, resulting in a barrel-shaped structure. The two inner rings, each composed of seven catalytic beta subunits, are sandwiched by two outer rings, each composed of seven alpha subunits. The catalytic chamber with the active sites is on the inside of the barrel. Has a gated structure, the ends of the cylinder being occluded by the N-termini of the alpha-subunits. Is capped by the proteasome-associated ATPase, ARC.

The protein resides in the cytoplasm. It catalyses the reaction Cleavage of peptide bonds with very broad specificity.. It functions in the pathway protein degradation; proteasomal Pup-dependent pathway. The formation of the proteasomal ATPase ARC-20S proteasome complex, likely via the docking of the C-termini of ARC into the intersubunit pockets in the alpha-rings, may trigger opening of the gate for substrate entry. Interconversion between the open-gate and close-gate conformations leads to a dynamic regulation of the 20S proteasome proteolysis activity. In terms of biological role, component of the proteasome core, a large protease complex with broad specificity involved in protein degradation. This is Proteasome subunit beta from Mycobacterium marinum (strain ATCC BAA-535 / M).